The sequence spans 440 residues: 5-methylthioadenosine/S-adenosylhomocysteine deaminase (440 aa).

Zn(2+) is bound by residues histidine 70 and histidine 72. Residues glutamate 99 and histidine 191 each contribute to the substrate site. Histidine 218 lines the Zn(2+) pocket. The substrate site is built by glutamate 221 and aspartate 306. A Zn(2+)-binding site is contributed by aspartate 306.

Belongs to the metallo-dependent hydrolases superfamily. MTA/SAH deaminase family. It depends on Zn(2+) as a cofactor.

The enzyme catalyses S-adenosyl-L-homocysteine + H2O + H(+) = S-inosyl-L-homocysteine + NH4(+). It carries out the reaction S-methyl-5'-thioadenosine + H2O + H(+) = S-methyl-5'-thioinosine + NH4(+). In terms of biological role, catalyzes the deamination of 5-methylthioadenosine and S-adenosyl-L-homocysteine into 5-methylthioinosine and S-inosyl-L-homocysteine, respectively. Is also able to deaminate adenosine. This is 5-methylthioadenosine/S-adenosylhomocysteine deaminase from Nitratidesulfovibrio vulgaris (strain DSM 19637 / Miyazaki F) (Desulfovibrio vulgaris).